Consider the following 323-residue polypeptide: L-lactate dehydrogenase (323 aa).

Residues V18, D39, Y69, and G83–A84 contribute to the NAD(+) site. 2 residues coordinate substrate: Q86 and R92. Residues S105, V122–N124, and S147 contribute to the NAD(+) site. Substrate is bound at residue N124–D127. D152 to R155 is a substrate binding site. Catalysis depends on H179, which acts as the Proton acceptor. Position 223 is a phosphotyrosine (Y223). T232 provides a ligand contact to substrate.

Belongs to the LDH/MDH superfamily. LDH family. As to quaternary structure, homotetramer.

Its subcellular location is the cytoplasm. It carries out the reaction (S)-lactate + NAD(+) = pyruvate + NADH + H(+). The protein operates within fermentation; pyruvate fermentation to lactate; (S)-lactate from pyruvate: step 1/1. Its activity is regulated as follows. Under neutral conditions, the reaction is stimulated 4-fold by fructose 1,6-bisphosphate (FBP), however the L-lactate dehydrogenase is a nonallosteric enzyme. Calcium and zinc ions at 1 mM stimulate the activity almost 2-fold. Weakly inhibited by cadmium, cobalt and copper ions. Catalyzes the conversion of lactate to pyruvate. This chain is L-lactate dehydrogenase, found in Lactobacillus helveticus (Lactobacillus suntoryeus).